We begin with the raw amino-acid sequence, 640 residues long: tRNA uridine 5-carboxymethylaminomethyl modification enzyme MnmG (640 aa).

FAD is bound at residue 9 to 14 (GGGHAG). 289-303 (GPRYCPSIEDKINKF) lines the NAD(+) pocket.

This sequence belongs to the MnmG family. As to quaternary structure, homodimer. Heterotetramer of two MnmE and two MnmG subunits. Requires FAD as cofactor.

Its subcellular location is the cytoplasm. NAD-binding protein involved in the addition of a carboxymethylaminomethyl (cmnm) group at the wobble position (U34) of certain tRNAs, forming tRNA-cmnm(5)s(2)U34. The polypeptide is tRNA uridine 5-carboxymethylaminomethyl modification enzyme MnmG (Campylobacter hominis (strain ATCC BAA-381 / DSM 21671 / CCUG 45161 / LMG 19568 / NCTC 13146 / CH001A)).